Reading from the N-terminus, the 108-residue chain is DNA-directed RNA polymerase subunit omega (108 aa).

The protein belongs to the RNA polymerase subunit omega family. The RNAP catalytic core consists of 2 alpha, 1 beta, 1 beta' and 1 omega subunit. When a sigma factor is associated with the core the holoenzyme is formed, which can initiate transcription.

It carries out the reaction RNA(n) + a ribonucleoside 5'-triphosphate = RNA(n+1) + diphosphate. Functionally, promotes RNA polymerase assembly. Latches the N- and C-terminal regions of the beta' subunit thereby facilitating its interaction with the beta and alpha subunits. The sequence is that of DNA-directed RNA polymerase subunit omega from Mycolicibacterium paratuberculosis (strain ATCC BAA-968 / K-10) (Mycobacterium paratuberculosis).